A 105-amino-acid chain; its full sequence is MSKSNTYRMLVLLEDDTKINKEDEKFLKGKPGKMHEFVDELILPFNVDELDELNTWFDKFDAEICIPNEGHIKYEISSDGLIVLMLDKEIEEVVEKVKKFVEENN.

S2 is modified (N-acetylserine).

This is an uncharacterized protein from Saccharomyces cerevisiae (strain ATCC 204508 / S288c) (Baker's yeast).